The sequence spans 189 residues: Movement protein (189 aa).

It belongs to the tombusvirus/aureusvirus movement protein p22 family. As to quaternary structure, interacts with host protein HFI22. Post-translationally, phosphorylated.

It localises to the host membrane. Its function is as follows. Transports viral genome to neighboring plant cells directly through plasmosdesmata, without any budding. The movement protein allows efficient cell to cell propagation, by bypassing the host cell wall barrier. The polypeptide is Movement protein (Capsicum annuum (Capsicum pepper)).